The primary structure comprises 507 residues: ATP synthase subunit alpha, chloroplastic (507 aa).

Glycine 170 to threonine 177 contributes to the ATP binding site.

The protein belongs to the ATPase alpha/beta chains family. As to quaternary structure, F-type ATPases have 2 components, CF(1) - the catalytic core - and CF(0) - the membrane proton channel. CF(1) has five subunits: alpha(3), beta(3), gamma(1), delta(1), epsilon(1). CF(0) has four main subunits: a, b, b' and c.

It localises to the plastid. It is found in the chloroplast thylakoid membrane. The enzyme catalyses ATP + H2O + 4 H(+)(in) = ADP + phosphate + 5 H(+)(out). In terms of biological role, produces ATP from ADP in the presence of a proton gradient across the membrane. The alpha chain is a regulatory subunit. The chain is ATP synthase subunit alpha, chloroplastic from Phalaenopsis aphrodite subsp. formosana (Moth orchid).